The primary structure comprises 68 residues: Large ribosomal subunit protein uL30 (68 aa).

The protein belongs to the universal ribosomal protein uL30 family. As to quaternary structure, part of the 50S ribosomal subunit.

This chain is Large ribosomal subunit protein uL30, found in Agrobacterium fabrum (strain C58 / ATCC 33970) (Agrobacterium tumefaciens (strain C58)).